Reading from the N-terminus, the 85-residue chain is Colicin-E6 immunity protein (85 aa).

Belongs to the cloacin immunity protein family.

Functionally, this protein inhibits the 16S RNA hydrolyzing activity of colicin E6 by binding with high affinity to the C-terminal catalytic domain of E6. This protein is able to protect a cell, which harbors the plasmid ColE6 against colicin E6. The chain is Colicin-E6 immunity protein (imm) from Escherichia coli.